Reading from the N-terminus, the 720-residue chain is Engulfment and cell motility protein 2 (720 aa).

Tyrosine 48 carries the post-translational modification Phosphotyrosine. One can recognise an ELMO domain in the interval 310 to 484 (QAQRDIIFEL…QVVREQITRA (175 aa)). Serine 503 bears the Phosphoserine mark. A PH domain is found at 553 to 674 (SSFRKIGNRR…LLGKDMSSEL (122 aa)). The SH3-binding signature appears at 700–707 (PEAPPPVP). Tyrosine 717 is subject to Phosphotyrosine.

In terms of assembly, interacts directly with the SH3-domain of DOCK1 via its SH3-binding site. Probably forms a heterotrimeric complex with DOCK1 and RAC1. Interacts with ARHGEF16, DOCK4 and EPHA2; mediates activation of RAC1 by EPHA2. Interacts with ADGRB3. Interacts with AUTS2; the interaction is direct.

It is found in the cytoplasm. The protein resides in the cytosol. Its subcellular location is the membrane. Its function is as follows. Involved in cytoskeletal rearrangements required for phagocytosis of apoptotic cells and cell motility. Acts in association with DOCK1 and CRK. Was initially proposed to be required in complex with DOCK1 to activate Rac Rho small GTPases. May enhance the guanine nucleotide exchange factor (GEF) activity of DOCK1. The protein is Engulfment and cell motility protein 2 (ELMO2) of Bos taurus (Bovine).